The chain runs to 109 residues: Nucleoid-associated protein LGAS_0369 (109 aa).

The protein belongs to the YbaB/EbfC family. As to quaternary structure, homodimer.

Its subcellular location is the cytoplasm. The protein resides in the nucleoid. Its function is as follows. Binds to DNA and alters its conformation. May be involved in regulation of gene expression, nucleoid organization and DNA protection. The polypeptide is Nucleoid-associated protein LGAS_0369 (Lactobacillus gasseri (strain ATCC 33323 / DSM 20243 / BCRC 14619 / CIP 102991 / JCM 1131 / KCTC 3163 / NCIMB 11718 / NCTC 13722 / AM63)).